The following is a 79-amino-acid chain: Cyclin-dependent kinases regulatory subunit 2 (79 aa).

Lys-4 carries the post-translational modification N6-acetyllysine.

The protein belongs to the CKS family. As to quaternary structure, forms a homohexamer that can probably bind six kinase subunits.

Functionally, binds to the catalytic subunit of the cyclin dependent kinases and is essential for their biological function. This chain is Cyclin-dependent kinases regulatory subunit 2 (CKS2), found in Bos taurus (Bovine).